The sequence spans 427 residues: Acyl-CoA hydrolase 2 (427 aa).

An a nucleoside 3',5'-cyclic phosphate-binding site is contributed by 15 to 83 (LLQKLPSSSL…FLLKQYDYFG (69 aa)). Residues D337, S359, and Q409 each act as charge relay system in the active site. The Microbody targeting signal motif lies at 425 to 427 (SKL).

It belongs to the C/M/P thioester hydrolase family. Homotetramer. Mostly expressed in leaves and flowers, and, to a lower extent, in seedlings and siliques.

The protein localises to the peroxisome matrix. It carries out the reaction a fatty acyl-CoA + H2O = a fatty acid + CoA + H(+). The enzyme catalyses dodecanoyl-CoA + H2O = dodecanoate + CoA + H(+). The catalysed reaction is tetradecanoyl-CoA + H2O = tetradecanoate + CoA + H(+). It catalyses the reaction octadecanoyl-CoA + H2O = octadecanoate + CoA + H(+). It carries out the reaction (9Z)-hexadecenoyl-CoA + H2O = (9Z)-hexadecenoate + CoA + H(+). The enzyme catalyses (5Z,8Z,11Z,14Z)-eicosatetraenoyl-CoA + H2O = (5Z,8Z,11Z,14Z)-eicosatetraenoate + CoA + H(+). The catalysed reaction is hexadecanoyl-CoA + H2O = hexadecanoate + CoA + H(+). It catalyses the reaction (9Z)-octadecenoyl-CoA + H2O = (9Z)-octadecenoate + CoA + H(+). It carries out the reaction (9Z,12Z)-octadecadienoyl-CoA + H2O = (9Z,12Z)-octadecadienoate + CoA + H(+). Its pathway is lipid metabolism; fatty acid metabolism. Its activity is regulated as follows. Insensitive to feedback inhibition by free coenzyme A (CoASH). Its function is as follows. Catalyzes the hydrolysis of acyl-CoAs into free fatty acids and coenzyme A (CoASH), regulating their respective intracellular levels. Active with both medium chain and long chain acyl-CoAs (e.g. 12:0-CoA, 14:0-CoA, 16:0-CoA, 18:0-CoA, 16:1-CoA, 18:1-CoA, 18:2-CoA and 20:4-CoA) as substrates, palmitoleoyl-CoA (16:1-CoA) being the favorite substrate. The polypeptide is Acyl-CoA hydrolase 2 (Arabidopsis thaliana (Mouse-ear cress)).